We begin with the raw amino-acid sequence, 287 residues long: 4-hydroxybenzoate octaprenyltransferase (287 aa).

6 helical membrane passes run 41–61 (LPLLVIFTVGTVLMRSAGCAI), 92–112 (VALAAALSLLAFLLILPLNAL), 133–153 (FFAIPQAYLGIAFGFGIPMAF), 160–180 (VPMLAWVMLLANVFWSVAYDT), 218–238 (LGIYVGIGVLLGFGALYWLGW), and 267–287 (NNWLGGALFAGIAAHYAATWF).

This sequence belongs to the UbiA prenyltransferase family. Requires Mg(2+) as cofactor.

Its subcellular location is the cell inner membrane. It carries out the reaction all-trans-octaprenyl diphosphate + 4-hydroxybenzoate = 4-hydroxy-3-(all-trans-octaprenyl)benzoate + diphosphate. It functions in the pathway cofactor biosynthesis; ubiquinone biosynthesis. Catalyzes the prenylation of para-hydroxybenzoate (PHB) with an all-trans polyprenyl group. Mediates the second step in the final reaction sequence of ubiquinone-8 (UQ-8) biosynthesis, which is the condensation of the polyisoprenoid side chain with PHB, generating the first membrane-bound Q intermediate 3-octaprenyl-4-hydroxybenzoate. This is 4-hydroxybenzoate octaprenyltransferase from Paraburkholderia xenovorans (strain LB400).